Consider the following 218-residue polypeptide: Ribosome maturation factor RimM (218 aa).

The PRC barrel domain maps to 141–214; sequence GELWWDRDLV…HIVVDPPPGL (74 aa).

This sequence belongs to the RimM family. In terms of assembly, binds ribosomal protein uS19.

It is found in the cytoplasm. Functionally, an accessory protein needed during the final step in the assembly of 30S ribosomal subunit, possibly for assembly of the head region. Essential for efficient processing of 16S rRNA. May be needed both before and after RbfA during the maturation of 16S rRNA. It has affinity for free ribosomal 30S subunits but not for 70S ribosomes. This Parafrankia sp. (strain EAN1pec) protein is Ribosome maturation factor RimM.